The sequence spans 598 residues: uncharacterized protein (598 aa).

The 284-residue stretch at 39 to 322 folds into the ABC transmembrane type-1 domain; that stretch reads LIMVFVFVTV…LSNQFNMIQM (284 aa). 5 consecutive transmembrane segments (helical) span residues 40–60, 80–100, 150–170, 177–197, and 273–293; these read IMVFVFVTVSSILGVLSPYLI, MLILGTIYALTSLLFWLQGKI, VLGNSIIQFFSGIVTLAGAVI, VILSLVTLSIVPLTVLITQIV, and LGFALISGFGGWLALKDIITV. In terms of domain architecture, ABC transporter spans 355–589; that stretch reads IEFKNVWFSY…RGFYYELFTS (235 aa). Position 388-395 (388-395) interacts with ATP; sequence GPTGSGKT.

This sequence belongs to the ABC transporter superfamily.

Its subcellular location is the cell membrane. This is an uncharacterized protein from Thermotoga maritima (strain ATCC 43589 / DSM 3109 / JCM 10099 / NBRC 100826 / MSB8).